Reading from the N-terminus, the 527-residue chain is Arginine--tRNA ligase (527 aa).

The 'HIGH' region motif lies at 111–121; that stretch reads ANPTGPLHIGH.

The protein belongs to the class-I aminoacyl-tRNA synthetase family. As to quaternary structure, monomer.

Its subcellular location is the cytoplasm. It catalyses the reaction tRNA(Arg) + L-arginine + ATP = L-arginyl-tRNA(Arg) + AMP + diphosphate. The chain is Arginine--tRNA ligase from Campylobacter concisus (strain 13826).